Consider the following 728-residue polypeptide: MSNETKCPFNHTAGSGTTNKDWWPNQLNLNVLHRHSALSDPMDPDFDYAEAFKKLDLAAVKQDLHALMTTSQDWWPADFGHYGGLFVRMAWHSAGTYRTADGRGGAGGGQQRFAPLNSWPDNVSLDKARRLLWPIKQKYGRNISWADLLILTGNVALESMGFKTFGYAGGRADTWEPDDVYWGSEKIWLELSGGPNSRYTGKRELESPLAAVQMGLIYVNPEGPDGNPDPVAAAHDIRETFARMAMNDEETVALIAGGHTFGKTHGAGPASNVGPEPEAAGLEEQGLGWKSTFGTGKGKDTITSGLEVTWTSTPTKWSNDFFKHLFSYEWELTKSPAGAHQWVAKDAGEVIPDAYDASKKHRPTMLTTDLSLRFDPAYEKISRRFYENPAEFADAFARAWFKLTHRDMGPRARYLGPEVPAEHLLWQDPIPAVDHPLIDAADVAALKAKVLATGLSVSQLVSTAWASAATFRGSDKRGGANGARIRLAPQKDWEVNQPVALAAVLETLEGVQKAFNDAQTDGKKVSLADLIVLAGAAGVEQAAKNAGISISVPFAPGRMDASQEETDVDAMAVLEPVADGFRNYLKSAYKTPAEALLVDKAQLLTLTAPEMTVLVGGLRVLGANVGDSKHGVFTDRPGTLSNDFFANLLDMGTEWKPVSAANDVFEGRDRATGAVKWTGTRVDLIFGSHSQLRALAEVYGSADAQEKFVRDFVAAWNKVMNLDRFDLA.

Residues 91–218 constitute a cross-link (tryptophyl-tyrosyl-methioninium (Trp-Tyr) (with M-244)); it reads WHSAGTYRTA…LAAVQMGLIY (128 aa). H92 functions as the Proton acceptor in the catalytic mechanism. A cross-link (tryptophyl-tyrosyl-methioninium (Tyr-Met) (with W-91)) is located at residues 218 to 244; the sequence is YVNPEGPDGNPDPVAAAHDIRETFARM. H259 is a binding site for heme b.

This sequence belongs to the peroxidase family. Peroxidase/catalase subfamily. In terms of assembly, homodimer or homotetramer. Requires heme b as cofactor. Formation of the three residue Trp-Tyr-Met cross-link is important for the catalase, but not the peroxidase activity of the enzyme.

It catalyses the reaction H2O2 + AH2 = A + 2 H2O. The enzyme catalyses 2 H2O2 = O2 + 2 H2O. Functionally, bifunctional enzyme with both catalase and broad-spectrum peroxidase activity. The polypeptide is Catalase-peroxidase 1 (Burkholderia orbicola (strain MC0-3)).